The following is an 828-amino-acid chain: Periplasmic nitrate reductase (828 aa).

Residues 1 to 31 constitute a signal peptide (tat-type signal); that stretch reads MKLSRRSFMKANAVAAVAAAAGLSVPGVARA. The region spanning 39 to 95 is the 4Fe-4S Mo/W bis-MGD-type domain; it reads IKWDKAPCRFCGTGCGVLVGTQQGRVVACQGDPDAPVNRGLNCIKGYFLPKIMYGKD. [4Fe-4S] cluster-binding residues include Cys46, Cys49, Cys53, and Cys81. Residues Lys83, Gln150, Asn175, Cys179, 212 to 219, 243 to 247, 262 to 264, Met372, Gln376, Asn482, 508 to 509, Lys531, Asp558, and 718 to 727 each bind Mo-bis(molybdopterin guanine dinucleotide); these read WGANMAEM, STYQH, QSD, SD, and TGRVLEHWHT. A substrate-binding site is contributed by Phe794. Asn802 and Lys819 together coordinate Mo-bis(molybdopterin guanine dinucleotide).

Belongs to the prokaryotic molybdopterin-containing oxidoreductase family. NasA/NapA/NarB subfamily. As to quaternary structure, component of the periplasmic nitrate reductase NapAB complex composed of NapA and NapB. [4Fe-4S] cluster is required as a cofactor. Requires Mo-bis(molybdopterin guanine dinucleotide) as cofactor. Predicted to be exported by the Tat system. The position of the signal peptide cleavage has not been experimentally proven.

It is found in the periplasm. The enzyme catalyses 2 Fe(II)-[cytochrome] + nitrate + 2 H(+) = 2 Fe(III)-[cytochrome] + nitrite + H2O. Its function is as follows. Catalytic subunit of the periplasmic nitrate reductase complex NapAB. Receives electrons from NapB and catalyzes the reduction of nitrate to nitrite. In Shigella boydii serotype 4 (strain Sb227), this protein is Periplasmic nitrate reductase.